The chain runs to 149 residues: Hordoindoline-A (149 aa).

The signal sequence occupies residues 1 to 19 (MKALFLMGLLALVASAAFA). A propeptide spanning residues 20 to 28 (QYGEVVGSY) is cleaved from the precursor. Residues 148-149 (YW) constitute a propeptide, removed in mature form.

In terms of processing, five disulfide bonds are present. Found in endosperm and aleurone layer of developing kernels, but not in the embryo.

Its subcellular location is the membrane. The protein resides in the secreted. It localises to the extracellular space. Its function is as follows. Acts as a membranotoxin, probably through its antibacterial and antifungal activities, contributing to the defense mechanism of the plant against predators. Forms monovalent cation-selective ion channels in membranes. Contributes to grain texture and hardness. The protein is Hordoindoline-A (HINA) of Hordeum vulgare (Barley).